We begin with the raw amino-acid sequence, 529 residues long: Cytochrome P450 monooxygenase atmQ (529 aa).

2 helical membrane passes run 22-42 (YPFAAPTWVYLVGAILIQQLA) and 51-71 (SWVNVPVVGGHGIIGSWIAAF). A heme-binding site is contributed by Cys467.

The protein belongs to the cytochrome P450 family. Requires heme as cofactor.

The protein localises to the membrane. Its pathway is secondary metabolite biosynthesis. Functionally, cytochrome P450 monooxygenase; part of the ATM2 gene cluster that mediates the biosynthesis of aflatrem, a tremorgenic mycotoxin with acute neurotoxic effects. Synthesis of geranylgeranyl diphosphate (GGPP) by AtmG (a GGPP synthase) precedes condensation of GGPP with indole 3-glycerol phosphate, followed by epoxidation and cyclization by AtmM (a FAD-dependent monooxygenase) and AtmC (a prenyltransferase) to produce paspaline. AtmB is also essential for paspaline production, but its exact role has not been identified yet. AtmP, a cytochrome P450 monooxygenase, subsequently converts paspaline to 13-desoxypaxilline via PC-M6 by removal of the C-30 methyl group and oxidation at C-10. AtmQ, a cytochrome P450 monooxygenase, then catalyzes the oxidation of 13-desoxypaxilline, first at C-7 to produce paspalicine and then at C-13 to form paspalinine. Finally, AtmD prenylates paspalinine to form aflatrem. This is Cytochrome P450 monooxygenase atmQ from Aspergillus flavus.